We begin with the raw amino-acid sequence, 453 residues long: Probable glycine dehydrogenase (decarboxylating) subunit 1 (453 aa).

This sequence belongs to the GcvP family. N-terminal subunit subfamily. The glycine cleavage system is composed of four proteins: P, T, L and H. In this organism, the P 'protein' is a heterodimer of two subunits.

It catalyses the reaction N(6)-[(R)-lipoyl]-L-lysyl-[glycine-cleavage complex H protein] + glycine + H(+) = N(6)-[(R)-S(8)-aminomethyldihydrolipoyl]-L-lysyl-[glycine-cleavage complex H protein] + CO2. The glycine cleavage system catalyzes the degradation of glycine. The P protein binds the alpha-amino group of glycine through its pyridoxal phosphate cofactor; CO(2) is released and the remaining methylamine moiety is then transferred to the lipoamide cofactor of the H protein. This is Probable glycine dehydrogenase (decarboxylating) subunit 1 from Erythrobacter litoralis (strain HTCC2594).